Here is a 345-residue protein sequence, read N- to C-terminus: S-adenosylmethionine:tRNA ribosyltransferase-isomerase (345 aa).

Belongs to the QueA family. Monomer.

It localises to the cytoplasm. It carries out the reaction 7-aminomethyl-7-carbaguanosine(34) in tRNA + S-adenosyl-L-methionine = epoxyqueuosine(34) in tRNA + adenine + L-methionine + 2 H(+). Its pathway is tRNA modification; tRNA-queuosine biosynthesis. Its function is as follows. Transfers and isomerizes the ribose moiety from AdoMet to the 7-aminomethyl group of 7-deazaguanine (preQ1-tRNA) to give epoxyqueuosine (oQ-tRNA). The polypeptide is S-adenosylmethionine:tRNA ribosyltransferase-isomerase (Helicobacter acinonychis (strain Sheeba)).